Here is a 154-residue protein sequence, read N- to C-terminus: 6,7-dimethyl-8-ribityllumazine synthase (154 aa).

Residues phenylalanine 22, 56–58 (SFE), and 80–82 (AVI) contribute to the 5-amino-6-(D-ribitylamino)uracil site. 85-86 (ST) is a (2S)-2-hydroxy-3-oxobutyl phosphate binding site. Histidine 88 (proton donor) is an active-site residue. Tyrosine 113 is a binding site for 5-amino-6-(D-ribitylamino)uracil. Position 127 (arginine 127) interacts with (2S)-2-hydroxy-3-oxobutyl phosphate.

The protein belongs to the DMRL synthase family. As to quaternary structure, forms an icosahedral capsid composed of 60 subunits, arranged as a dodecamer of pentamers.

The catalysed reaction is (2S)-2-hydroxy-3-oxobutyl phosphate + 5-amino-6-(D-ribitylamino)uracil = 6,7-dimethyl-8-(1-D-ribityl)lumazine + phosphate + 2 H2O + H(+). Its pathway is cofactor biosynthesis; riboflavin biosynthesis; riboflavin from 2-hydroxy-3-oxobutyl phosphate and 5-amino-6-(D-ribitylamino)uracil: step 1/2. In terms of biological role, catalyzes the formation of 6,7-dimethyl-8-ribityllumazine by condensation of 5-amino-6-(D-ribitylamino)uracil with 3,4-dihydroxy-2-butanone 4-phosphate. This is the penultimate step in the biosynthesis of riboflavin. The protein is 6,7-dimethyl-8-ribityllumazine synthase of Sulfurihydrogenibium sp. (strain YO3AOP1).